Reading from the N-terminus, the 408-residue chain is Broad specificity amino-acid racemase (408 aa).

Positions 1 to 21 (MHKKTLLATLILGLLAGQAVA) are cleaved as a signal peptide. Cys70 and Cys96 form a disulfide bridge. Lys74 (proton acceptor) is an active-site residue. Lys74 is modified (N6-(pyridoxal phosphate)lysine). Arg173 contributes to the substrate binding site. Tyr300 serves as the catalytic Proton acceptor. Met348 serves as a coordination point for substrate.

This sequence belongs to the alanine racemase family. Bsr subfamily. Homodimer. It depends on pyridoxal 5'-phosphate as a cofactor.

Its subcellular location is the periplasm. The enzyme catalyses an L-alpha-amino acid = a D-alpha-amino acid. The catalysed reaction is L-lysine = D-lysine. It catalyses the reaction L-arginine = D-arginine. It carries out the reaction L-alanine = D-alanine. The enzyme catalyses L-serine = D-serine. The catalysed reaction is L-methionine = D-methionine. It catalyses the reaction L-leucine = D-leucine. It carries out the reaction L-cysteine = D-cysteine. The enzyme catalyses L-glutamine = D-glutamine. The catalysed reaction is L-asparagine = D-asparagine. It catalyses the reaction L-histidine = D-histidine. Its function is as follows. Amino-acid racemase able to utilize a broad range of substrates. Reversibly racemizes ten of the 19 natural chiral amino acids known, including both non-beta-branched aliphatic amino acids (Ala, Leu, Met, Ser, Cys, Gln and Asn) and positively charged amino acids (His, Lys and Arg). Is not active on negatively charged (Glu and Asp) or aromatic (Tyr, Trp and Phe) amino acids and displays minimal activity towards beta-branched aliphatic (Ile, Val and Thr) substrates. Enables bacteria to produce and release extracellular non-canonical D-amino acids (NCDAAs) that regulate diverse cellular processes. The chain is Broad specificity amino-acid racemase from Aeromonas hydrophila subsp. hydrophila (strain ATCC 7966 / DSM 30187 / BCRC 13018 / CCUG 14551 / JCM 1027 / KCTC 2358 / NCIMB 9240 / NCTC 8049).